We begin with the raw amino-acid sequence, 272 residues long: Orotidine 5'-phosphate decarboxylase (272 aa).

Lys-95 functions as the Proton donor in the catalytic mechanism.

This sequence belongs to the OMP decarboxylase family. Type 2 subfamily.

It carries out the reaction orotidine 5'-phosphate + H(+) = UMP + CO2. The protein operates within pyrimidine metabolism; UMP biosynthesis via de novo pathway; UMP from orotate: step 2/2. The chain is Orotidine 5'-phosphate decarboxylase from Cupriavidus taiwanensis (strain DSM 17343 / BCRC 17206 / CCUG 44338 / CIP 107171 / LMG 19424 / R1) (Ralstonia taiwanensis (strain LMG 19424)).